Here is a 239-residue protein sequence, read N- to C-terminus: Small ribosomal subunit protein uS3 (239 aa).

A KH type-2 domain is found at 38–106; sequence IRELIEERFK…KTFVNVVEIK (69 aa).

Belongs to the universal ribosomal protein uS3 family. Part of the 30S ribosomal subunit. Forms a tight complex with proteins S10 and S14.

Its function is as follows. Binds the lower part of the 30S subunit head. Binds mRNA in the 70S ribosome, positioning it for translation. This chain is Small ribosomal subunit protein uS3, found in Elusimicrobium minutum (strain Pei191).